The chain runs to 167 residues: Leptin (167 aa).

The N-terminal stretch at 1–21 is a signal peptide; that stretch reads MRCGSLCRFLWLWSCLPYIEA. Cysteines 117 and 167 form a disulfide.

Belongs to the leptin family.

The protein resides in the secreted. Key player in the regulation of energy balance and body weight control. Once released into the circulation, has central and peripheral effects by binding LEPR, found in many tissues, which results in the activation of several major signaling pathways. In the hypothalamus, acts as an appetite-regulating factor that induces a decrease in food intake and an increase in energy consumption by inducing anorexinogenic factors and suppressing orexigenic neuropeptides, also regulates bone mass and secretion of hypothalamo-pituitary-adrenal hormones. In the periphery, increases basal metabolism, influences reproductive function, regulates pancreatic beta-cell function and insulin secretion, is pro-angiogenic for endothelial cell and affects innate and adaptive immunity. In the arcuate nucleus of the hypothalamus, activates by depolarization POMC neurons inducing FOS and SOCS3 expression to release anorexigenic peptides and inhibits by hyperpolarization NPY neurons inducing SOCS3 with a consequent reduction on release of orexigenic peptides. In addition to its known satiety inducing effect, has a modulatory role in nutrient absorption. In the intestine, reduces glucose absorption by enterocytes by activating PKC and leading to a sequential activation of p38, PI3K and ERK signaling pathways which exerts an inhibitory effect on glucose absorption. Acts as a growth factor on certain tissues, through the activation of different signaling pathways increases expression of genes involved in cell cycle regulation such as CCND1, via JAK2-STAT3 pathway, or VEGFA, via MAPK1/3 and PI3K-AKT1 pathways. May also play an apoptotic role via JAK2-STAT3 pathway and up-regulation of BIRC5 expression. Pro-angiogenic, has mitogenic activity on vascular endothelial cells and plays a role in matrix remodeling by regulating the expression of matrix metalloproteinases (MMPs) and tissue inhibitors of metalloproteinases (TIMPs). In innate immunity, modulates the activity and function of neutrophils by increasing chemotaxis and the secretion of oxygen radicals. Increases phagocytosis by macrophages and enhances secretion of pro-inflammatory mediators. Increases cytotoxic ability of NK cells. Plays a pro-inflammatory role, in synergy with IL1B, by inducing NOS2 which promotes the production of IL6, IL8 and Prostaglandin E2, through a signaling pathway that involves JAK2, PI3K, MAP2K1/MEK1 and MAPK14/p38. In adaptive immunity, promotes the switch of memory T-cells towards T helper-1 cell immune responses. Increases CD4(+)CD25(-) T-cell proliferation and reduces autophagy during TCR (T-cell receptor) stimulation, through MTOR signaling pathway activation and BCL2 up-regulation. In Halichoerus grypus (Gray seal), this protein is Leptin (LEP).